A 180-amino-acid polypeptide reads, in one-letter code: Large ribosomal subunit protein uL6 (180 aa).

The protein belongs to the universal ribosomal protein uL6 family. As to quaternary structure, part of the 50S ribosomal subunit.

This protein binds to the 23S rRNA, and is important in its secondary structure. It is located near the subunit interface in the base of the L7/L12 stalk, and near the tRNA binding site of the peptidyltransferase center. In Salinispora arenicola (strain CNS-205), this protein is Large ribosomal subunit protein uL6.